The chain runs to 162 residues: Putative ethylene-responsive transcription factor ERF121 (162 aa).

Disordered stretches follow at residues Met1–Leu21, Ile84–Ala103, and Lys139–Asp162. Positions Glu87 to Ser98 are enriched in basic residues. A DNA-binding region (AP2/ERF) is located at residues Lys89–Ser146.

Belongs to the AP2/ERF transcription factor family. ERF subfamily.

The protein localises to the nucleus. Probably acts as a transcriptional activator. Binds to the GCC-box pathogenesis-related promoter element. May be involved in the regulation of gene expression by stress factors and by components of stress signal transduction pathways. This Arabidopsis thaliana (Mouse-ear cress) protein is Putative ethylene-responsive transcription factor ERF121 (ERF121).